Reading from the N-terminus, the 404-residue chain is XK-related protein 8 (404 aa).

The next 8 helical transmembrane spans lie at 14-34, 44-64, 169-189, 209-229, 232-252, 262-282, 293-313, and 324-344; these read FVFS…DVWL, VTWF…VQTF, AVQF…VVDY, LIYF…LALC, VLSG…ALWA, SVAG…FSWF, SAIY…TWWC, and ALAL…FKAL.

Belongs to the XK family.

It is found in the cell membrane. It carries out the reaction a 1,2-diacyl-sn-glycero-3-phospho-L-serine(in) = a 1,2-diacyl-sn-glycero-3-phospho-L-serine(out). Functionally, phospholipid scramblase that promotes phosphatidylserine exposure on apoptotic cell surface, possibly by mediating phospholipid scrambling. Phosphatidylserine is a specific marker only present at the surface of apoptotic cells and acts as a specific signal for engulfment. The chain is XK-related protein 8 from Gasterosteus aculeatus (Three-spined stickleback).